A 134-amino-acid chain; its full sequence is Ribosome-binding factor A (134 aa).

The interval 115–134 (EDQRQERGEIPPGSDELQPD) is disordered.

It belongs to the RbfA family. Monomer. Binds 30S ribosomal subunits, but not 50S ribosomal subunits or 70S ribosomes.

Its subcellular location is the cytoplasm. In terms of biological role, one of several proteins that assist in the late maturation steps of the functional core of the 30S ribosomal subunit. Associates with free 30S ribosomal subunits (but not with 30S subunits that are part of 70S ribosomes or polysomes). Required for efficient processing of 16S rRNA. May interact with the 5'-terminal helix region of 16S rRNA. The chain is Ribosome-binding factor A from Synechococcus sp. (strain CC9902).